The primary structure comprises 988 residues: Transcription regulator srbA precursor (988 aa).

Residues 1-427 lie on the Cytoplasmic side of the membrane; that stretch reads MSTPGIGGDF…SSWHARAISH (427 aa). Disordered stretches follow at residues 53–85 and 108–169; these read AFPE…SDAM and GDLN…KKRA. Over residues 125–136 the composition is skewed to low complexity; it reads SLSVHSNSPLSS. Residues 165-178 are basic motif; that stretch reads SKKRAHNVIEKRYR. A bHLH domain is found at 165–236; sequence SKKRAHNVIE…SKATEYIRHL (72 aa). A helix-loop-helix motif region spans residues 179–236; it reads ANLNEKIAELRDSVPSLRASYKQANGNSGDDDDDGVTSASKLNKASILSKATEYIRHL. Residues 226–260 adopt a coiled-coil conformation; that stretch reads LSKATEYIRHLEIRNKRLEEENTALKIRLRQLDKA. The span at 267–291 shows a compositional bias: polar residues; that stretch reads SAASVSSPSDCTVSTESGASSSPSV. The segment at 267–313 is disordered; the sequence is SAASVSSPSDCTVSTESGASSSPSVFSHAEDVPSDHSPTSSHPPEGL. The span at 301–310 shows a compositional bias: low complexity; it reads DHSPTSSHPP. A helical transmembrane segment spans residues 428–447; sequence FLMLAILVVGSAFIVFVYLF. At 448-988 the chain is on the lumenal side; sequence NSDPRRQYSA…SDNLLLSDES (541 aa). Over residues 866-881 the composition is skewed to low complexity; that stretch reads PPSPMSKASDMLSSSS. Positions 866 to 900 are disordered; sequence PPSPMSKASDMLSSSSDDGEDGASQRNNNIIPHPM.

In low oxygen or sterol conditions, undergoes proteolytic cleavage by rhomboid-type protease rbdB and is released as soluble transcription factor from the membrane.

It is found in the endoplasmic reticulum membrane. The protein resides in the nucleus. In terms of biological role, precursor of the transcription factor srbA, which is embedded in the endoplasmic reticulum membrane. Low oxygen or sterol conditions promote processing of this form, releasing the transcription factor form that translocates into the nucleus and activates transcription of genes required for adaptation to anaerobic growth. Transcription factor that regulates sterol biosynthesis and hyphal morphology. Plays a critical role in ergosterol biosynthesis, resistance to the azole class of antifungal drugs, and in maintenance of cell polarity. Directly binds erg11A/cyp51A upstream DNA sequence at tandem repeats, called TR34 and TR46, that produce duplicated binding sites. Also mediates regulation of iron acquisition in response to hypoxia and low iron conditions via activation of extra- and intracellular siderophore production. Positively regulates the expression of the other hypoxia adaptation key transcription factor srbB. Required for the azole-sensing and response to azole stress. Binds the high-affinity sites 5'-A-T-C-G/A-T/G-A/G-C/T-G/C-A-T-3' of target promoters. Required for virulence in murine models of invasive pulmonary aspergillosis (IPA). This Aspergillus fumigatus (strain ATCC MYA-4609 / CBS 101355 / FGSC A1100 / Af293) (Neosartorya fumigata) protein is Transcription regulator srbA precursor.